The sequence spans 628 residues: Biosynthetic arginine decarboxylase (628 aa).

Position 101 is an N6-(pyridoxal phosphate)lysine (lysine 101). Residue 281 to 291 (VDVGGGLGVDY) coordinates substrate.

This sequence belongs to the Orn/Lys/Arg decarboxylase class-II family. SpeA subfamily. Requires Mg(2+) as cofactor. Pyridoxal 5'-phosphate is required as a cofactor.

It catalyses the reaction L-arginine + H(+) = agmatine + CO2. The protein operates within amine and polyamine biosynthesis; agmatine biosynthesis; agmatine from L-arginine: step 1/1. Catalyzes the biosynthesis of agmatine from arginine. In Alkalilimnicola ehrlichii (strain ATCC BAA-1101 / DSM 17681 / MLHE-1), this protein is Biosynthetic arginine decarboxylase.